The following is a 453-amino-acid chain: Sialic acid-binding Ig-like lectin 6 (453 aa).

Residues 1–26 (MQGAQEASASEMLPLLLPLLWAGALA) form the signal peptide. Residues 27-347 (QERRFQLEGP…WKPEGRAGGV (321 aa)) are Extracellular-facing. The region spanning 28–123 (ERRFQLEGPE…RDNAAYFFRL (96 aa)) is the Ig-like V-type domain. Intrachain disulfides connect Cys-46/Cys-172, Cys-51/Cys-104, and Cys-166/Cys-215. Asn-103 carries an N-linked (GlcNAc...) asparagine glycan. Residue Arg-122 participates in N-acetylneuraminate binding. The region spanning 148–231 (PNISIPGTLE…AGVTMERTIQ (84 aa)) is the Ig-like C2-type 1 domain. 2 N-linked (GlcNAc...) asparagine glycosylation sites follow: Asn-149 and Asn-163. The N-linked (GlcNAc...) asparagine glycan is linked to Asn-233. The Ig-like C2-type 2 domain occupies 238–333 (PQKVAISIFQ…PLGSLQISLS (96 aa)). A disulfide bond links Cys-274 and Cys-319. A helical transmembrane segment spans residues 348–368 (LGAVWGASITTLVFLCVCFIF). Over 369–453 (RVKTRRKKAA…TEYSEIKIHK (85 aa)) the chain is Cytoplasmic. An ITIM motif motif is present at residues 424–429 (LHYAVL). Residues 444–449 (TEYSEI) carry the SLAM-like motif motif.

The protein belongs to the immunoglobulin superfamily. SIGLEC (sialic acid binding Ig-like lectin) family. In terms of assembly, interacts with LEP. In terms of tissue distribution, expressed at high levels in placenta (cyto- and syncytiotrophoblastic cells) and at lower levels in spleen, peripheral blood leukocytes (predominantly B-cells) and small intestine.

The protein resides in the cell membrane. The protein localises to the secreted. In terms of biological role, putative adhesion molecule that mediates sialic-acid dependent binding to cells. Binds to alpha-2,6-linked sialic acid. The sialic acid recognition site may be masked by cis interactions with sialic acids on the same cell surface. This Homo sapiens (Human) protein is Sialic acid-binding Ig-like lectin 6 (SIGLEC6).